The primary structure comprises 163 residues: UPF0262 protein RPA4530 (163 aa).

This sequence belongs to the UPF0262 family.

The sequence is that of UPF0262 protein RPA4530 from Rhodopseudomonas palustris (strain ATCC BAA-98 / CGA009).